The sequence spans 209 residues: MAKGILGRKIGMTQVFAENGDLIPVTVIEATPNVVLQKKTVETDGYEAIQVGFEDKRVKLSNKPQQGHVAKANTAPKRFIREFRNVNVEEYEVGQEVKVEIFAEGDVIDVTGVTKGKGFQGVIKRHGQSRGPMAHGSRYHRRPGSMGPVAPNRVFKQKKLPGQMGGNVVTIQNLEIVKVDTDRNLLLVKGNVPGSKKALVTVKTASKAK.

The segment at R125–P148 is disordered.

It belongs to the universal ribosomal protein uL3 family. Part of the 50S ribosomal subunit. Forms a cluster with proteins L14 and L19.

In terms of biological role, one of the primary rRNA binding proteins, it binds directly near the 3'-end of the 23S rRNA, where it nucleates assembly of the 50S subunit. The polypeptide is Large ribosomal subunit protein uL3 (Lysinibacillus sphaericus (strain C3-41)).